We begin with the raw amino-acid sequence, 357 residues long: Cyclin-dependent kinase-like 1 (357 aa).

Positions 4-287 (YEKIGKIGEG…CEQLLHHPYF (284 aa)) constitute a Protein kinase domain. ATP contacts are provided by residues 10 to 18 (IGEGSYGVV) and Lys33. Residues 45–51 (KKIALRE) carry the [NKR]KIAxRE motif. Asp126 serves as the catalytic Proton acceptor.

The protein belongs to the protein kinase superfamily. CMGC Ser/Thr protein kinase family. CDC2/CDKX subfamily. In terms of tissue distribution, highly expressed in kidney, and to a lower extent in ovary.

Its subcellular location is the cytoplasm. It is found in the nucleus. The catalysed reaction is L-seryl-[protein] + ATP = O-phospho-L-seryl-[protein] + ADP + H(+). It carries out the reaction L-threonyl-[protein] + ATP = O-phospho-L-threonyl-[protein] + ADP + H(+). In Homo sapiens (Human), this protein is Cyclin-dependent kinase-like 1.